The primary structure comprises 1093 residues: Protein translocase subunit SecA (1093 aa).

ATP is bound by residues Gln84, 102–106, and Asp491; that span reads GEGKT. Disordered regions lie at residues 837-869 and 904-1062; these read QNLQ…SEHE and SELE…TSEA. Basic and acidic residues-rich tracts occupy residues 904 to 937, 944 to 971, and 978 to 1062; these read SELE…DATK, EELK…EKLK, and PKDL…TSEA.

Belongs to the SecA family. As to quaternary structure, monomer and homodimer. Part of the essential Sec protein translocation apparatus which comprises SecA, SecYEG and auxiliary proteins SecDF. Other proteins may also be involved.

The protein localises to the cell membrane. It localises to the cytoplasm. The catalysed reaction is ATP + H2O + cellular proteinSide 1 = ADP + phosphate + cellular proteinSide 2.. Its function is as follows. Part of the Sec protein translocase complex. Interacts with the SecYEG preprotein conducting channel. Has a central role in coupling the hydrolysis of ATP to the transfer of proteins into and across the cell membrane, serving as an ATP-driven molecular motor driving the stepwise translocation of polypeptide chains across the membrane. The sequence is that of Protein translocase subunit SecA from Mycoplasmopsis synoviae (strain 53) (Mycoplasma synoviae).